The chain runs to 340 residues: Deubiquitinase SseL (340 aa).

Residue histidine 222 is part of the active site. Cysteine 284 (nucleophile) is an active-site residue.

The protein belongs to the peptidase C79 family.

It localises to the secreted. The protein resides in the host cytoplasm. Functionally, effector proteins function to alter host cell physiology and promote bacterial survival in host tissues. This protease targets the host cell ubiquitin pathway by acting as a deubiquitinase in infected host cells. In Salmonella arizonae (strain ATCC BAA-731 / CDC346-86 / RSK2980), this protein is Deubiquitinase SseL (sseL).